The chain runs to 33 residues: Cecropin-C (33 aa).

Lysine 21 is modified (5-hydroxylysine).

Monomer. As to expression, hemolymph.

Its subcellular location is the secreted. Cecropins have lytic and antibacterial activity against several Gram-positive and Gram-negative bacteria. Also has activity against fungi. The sequence is that of Cecropin-C from Heliothis virescens (Tobacco budworm moth).